Consider the following 1653-residue polypeptide: Cortactin-binding protein 2 (1653 aa).

Disordered stretches follow at residues 1-27 (MATDGASCEPDASRAPEEAAGATAEAA), 203-222 (KKKTNELEEELSAEKRRSTE), 268-297 (QLKRGSDSKPSLSLPRKTKDRRSVSISVGT), 314-339 (ESTEHVKKSPLTVPVKPSPGSAKGSV), and 356-609 (HGDL…PSID). Positions 119-276 (RKMQERMSTQ…EQLKRGSDSK (158 aa)) form a coiled coil. Polar residues predominate over residues 379-389 (GPSTGSPPDLT). Residues 390–408 (SSAAQSPAAAPHGLPPAHG) are compositionally biased toward low complexity. Composition is skewed to polar residues over residues 444–470 (GNANDPDQNGNTTQSPPSRDVSPTSRD), 478–490 (ARNTVTQALSRFT), and 573–584 (TVASSPPSSLPQ). Arg-488 carries the post-translational modification Asymmetric dimethylarginine. 5 ANK repeats span residues 700–730 (GRPTLLQQAAAQGNVTLLSMLLNEEGLDINY), 734–763 (DGHSALYSAAKNGHTDCVRLLLNAEAQVNA), 767–796 (NGFTPLCAAAAQGHFECVELLIAYDAHINH), 800–829 (GGQTPLYLACKNGNKECIKLLLEAGTDRSV), and 833–862 (DGWTPVHAAVDTGNVDSLKLLMYHGAPAHG). Positions 860–892 (AHGNSLNEEEPESDASDLDEGEESSEGKSKPVV) are disordered. Residues 866 to 883 (NEEEPESDASDLDEGEES) show a composition bias toward acidic residues. Residues 903 to 933 (EGWTAAHIAASKGFKNCLEILCRHRGLEPER) form an ANK 6 repeat. The disordered stretch occupies residues 1441-1472 (ESGAWRKVNTSPRRKSGRFSSPTWNKPDLSNE). Residue Ser-1514 is modified to Phosphoserine. The tract at residues 1545–1653 (DLRTFDSSGN…KNEHIEKLNK (109 aa)) is disordered. 2 stretches are compositionally biased toward polar residues: residues 1549-1564 (FDSSGNNPAFSATANN) and 1572-1589 (KEVSPLSSHQTTECSNNK). Residues 1614-1628 (SQNTKRSSSSSNTRQ) show a composition bias toward low complexity. The segment covering 1635–1653 (SKEENWNLHKNEHIEKLNK) has biased composition (basic and acidic residues).

As to quaternary structure, interacts with CTTN/cortactin SH3 domain. Interacts with STRN, STRN4/zinedin and MOB4/phocein; this interactions mediate the association with the STRIPAK core complex and may regulate dendritic spine distribution of the STRIPAK complex in hippocampal neurons. Activation of glutamate receptors weakens the interaction with STRN and STRN4.

The protein localises to the cytoplasm. It localises to the cell cortex. Its subcellular location is the cell projection. The protein resides in the dendritic spine. Regulates the dendritic spine distribution of CTTN/cortactin in hippocampal neurons, and thus controls dendritic spinogenesis and dendritic spine maintenance. Associates with the striatin-interacting phosphatase and kinase (STRIPAK) core complex to regulate dendritic spine distribution of the STRIPAK complex in hippocampal neurons. This chain is Cortactin-binding protein 2 (CTTNBP2), found in Eulemur macaco macaco (Black lemur).